A 102-amino-acid chain; its full sequence is Small ribosomal subunit protein uS10 (102 aa).

This sequence belongs to the universal ribosomal protein uS10 family. As to quaternary structure, part of the 30S ribosomal subunit.

In terms of biological role, involved in the binding of tRNA to the ribosomes. This Rhodopseudomonas palustris (strain HaA2) protein is Small ribosomal subunit protein uS10.